Here is a 317-residue protein sequence, read N- to C-terminus: Olfactory receptor 6P1 (317 aa).

Residues 1-25 are Extracellular-facing; the sequence is MRNLSGGHVEEFVLVGFPTTPPLQL. The N-linked (GlcNAc...) asparagine glycan is linked to asparagine 3. The chain crosses the membrane as a helical span at residues 26 to 46; it reads LLFVLFFAIYLLTLLENALIV. The Cytoplasmic portion of the chain corresponds to 47 to 54; sequence FTIWLAPS. The chain crosses the membrane as a helical span at residues 55 to 75; sequence LHRPMYFFLGHLSFLELWYIN. At 76-99 the chain is on the extracellular side; it reads VTIPRLLAAFLTQDGRVSYVGCMT. A disulfide bond links cysteine 97 and cysteine 189. The helical transmembrane segment at 100 to 120 threads the bilayer; sequence QLYFFIALACTECVLLAVMAY. Residues 121 to 139 lie on the Cytoplasmic side of the membrane; that stretch reads DRYLAICGPLLYPSLMPSS. A helical membrane pass occupies residues 140 to 160; that stretch reads LATRLAAASWGSGFFSSMMKL. The Extracellular portion of the chain corresponds to 161–197; sequence LFISQLSYCGPNIINHFFCDISPLLNLTCSDKEQAEL. Asparagine 186 is a glycosylation site (N-linked (GlcNAc...) asparagine). Residues 198–217 form a helical membrane-spanning segment; that stretch reads VDFLLALVMILLPLLAVVSS. Topologically, residues 218 to 237 are cytoplasmic; the sequence is YTAIIAAILRIPTSRGRHKA. The chain crosses the membrane as a helical span at residues 238 to 258; that stretch reads FSTCAAHLAVVVIYYSSTLFT. Over 259–271 the chain is Extracellular; it reads YARPRAMYTFNHN. A helical membrane pass occupies residues 272–292; sequence KIISVLYTIIVPFFNPAIYCL. Over 293–317 the chain is Cytoplasmic; sequence RNKEVKEAFRKTVMGRCHYPRDVQD.

The protein belongs to the G-protein coupled receptor 1 family.

It localises to the cell membrane. In terms of biological role, odorant receptor. This is Olfactory receptor 6P1 (OR6P1) from Homo sapiens (Human).